A 120-amino-acid polypeptide reads, in one-letter code: Piercer of microtubule wall 2 protein (120 aa).

Over residues 1-10 (MTECDWEKKS) the composition is skewed to basic and acidic residues. The disordered stretch occupies residues 1–25 (MTECDWEKKSTSASNSDTEMKPELP).

Belongs to the PIERCE2 family. As to quaternary structure, microtubule inner protein component of sperm flagellar doublet microtubules. Interacts with CFAP53, ODAD1 and ODAD3; the interactions link the outer dynein arms docking complex (ODA-DC) to the internal microtubule inner proteins (MIP) in cilium axoneme. In terms of tissue distribution, expressed in trachea multiciliated cells.

It is found in the cytoplasm. Its subcellular location is the cytoskeleton. It localises to the cilium axoneme. The protein localises to the flagellum axoneme. In terms of biological role, microtubule inner protein involved in the attachment of outer dynein arms (ODAs) to dynein-decorated doublet microtubules (DMTs) in cilia axoneme, which is required for motile cilia beating. The polypeptide is Piercer of microtubule wall 2 protein (PIERCE2) (Bos taurus (Bovine)).